The following is a 368-amino-acid chain: Flagellar P-ring protein (368 aa).

The first 24 residues, 1-24 (MTLTRPLALISALAALILALPADA), serve as a signal peptide directing secretion.

It belongs to the FlgI family. The basal body constitutes a major portion of the flagellar organelle and consists of four rings (L,P,S, and M) mounted on a central rod.

The protein resides in the periplasm. It is found in the bacterial flagellum basal body. In terms of biological role, assembles around the rod to form the L-ring and probably protects the motor/basal body from shearing forces during rotation. This Methylobacillus flagellatus (strain ATCC 51484 / DSM 6875 / VKM B-1610 / KT) protein is Flagellar P-ring protein.